The primary structure comprises 133 residues: Large ribosomal subunit protein eL14 (133 aa).

The protein belongs to the eukaryotic ribosomal protein eL14 family.

The chain is Large ribosomal subunit protein eL14 (RPL14) from Griffithsia japonica (Red alga).